A 468-amino-acid polypeptide reads, in one-letter code: ATP synthase subunit beta (468 aa).

155 to 162 (GGAGVGKT) is an ATP binding site.

It belongs to the ATPase alpha/beta chains family. In terms of assembly, F-type ATPases have 2 components, CF(1) - the catalytic core - and CF(0) - the membrane proton channel. CF(1) has five subunits: alpha(3), beta(3), gamma(1), delta(1), epsilon(1). CF(0) has three main subunits: a(1), b(2) and c(9-12). The alpha and beta chains form an alternating ring which encloses part of the gamma chain. CF(1) is attached to CF(0) by a central stalk formed by the gamma and epsilon chains, while a peripheral stalk is formed by the delta and b chains.

It localises to the cell membrane. The catalysed reaction is ATP + H2O + 4 H(+)(in) = ADP + phosphate + 5 H(+)(out). Its function is as follows. Produces ATP from ADP in the presence of a proton gradient across the membrane. The catalytic sites are hosted primarily by the beta subunits. This chain is ATP synthase subunit beta, found in Streptococcus pyogenes serotype M3 (strain ATCC BAA-595 / MGAS315).